The primary structure comprises 457 residues: uncharacterized protein (457 aa).

2 helical membrane passes run 1–21 (MVSS…MTLL) and 250–270 (ILIV…ATTF).

The protein localises to the membrane. This is an uncharacterized protein from Saccharomyces cerevisiae (strain ATCC 204508 / S288c) (Baker's yeast).